The sequence spans 464 residues: 3-isopropylmalate dehydratase large subunit (464 aa).

Positions 345, 405, and 408 each coordinate [4Fe-4S] cluster.

Belongs to the aconitase/IPM isomerase family. LeuC type 1 subfamily. As to quaternary structure, heterodimer of LeuC and LeuD. It depends on [4Fe-4S] cluster as a cofactor.

The catalysed reaction is (2R,3S)-3-isopropylmalate = (2S)-2-isopropylmalate. It functions in the pathway amino-acid biosynthesis; L-leucine biosynthesis; L-leucine from 3-methyl-2-oxobutanoate: step 2/4. Functionally, catalyzes the isomerization between 2-isopropylmalate and 3-isopropylmalate, via the formation of 2-isopropylmaleate. This is 3-isopropylmalate dehydratase large subunit from Flavobacterium johnsoniae (strain ATCC 17061 / DSM 2064 / JCM 8514 / BCRC 14874 / CCUG 350202 / NBRC 14942 / NCIMB 11054 / UW101) (Cytophaga johnsonae).